The primary structure comprises 322 residues: 4-hydroxy-3-methylbut-2-enyl diphosphate reductase 1 (322 aa).

Residue Cys-18 participates in [4Fe-4S] cluster binding. Positions 47 and 82 each coordinate (2E)-4-hydroxy-3-methylbut-2-enyl diphosphate. Dimethylallyl diphosphate contacts are provided by His-47 and His-82. Isopentenyl diphosphate contacts are provided by His-47 and His-82. Cys-104 is a binding site for [4Fe-4S] cluster. Position 132 (His-132) interacts with (2E)-4-hydroxy-3-methylbut-2-enyl diphosphate. Dimethylallyl diphosphate is bound at residue His-132. Position 132 (His-132) interacts with isopentenyl diphosphate. Catalysis depends on Glu-134, which acts as the Proton donor. Thr-173 contacts (2E)-4-hydroxy-3-methylbut-2-enyl diphosphate. Cys-203 lines the [4Fe-4S] cluster pocket. Ser-231, Ser-232, Asn-233, and Ser-276 together coordinate (2E)-4-hydroxy-3-methylbut-2-enyl diphosphate. Residues Ser-231, Ser-232, Asn-233, and Ser-276 each coordinate dimethylallyl diphosphate. Ser-231, Ser-232, Asn-233, and Ser-276 together coordinate isopentenyl diphosphate.

The protein belongs to the IspH family. The cofactor is [4Fe-4S] cluster.

The enzyme catalyses isopentenyl diphosphate + 2 oxidized [2Fe-2S]-[ferredoxin] + H2O = (2E)-4-hydroxy-3-methylbut-2-enyl diphosphate + 2 reduced [2Fe-2S]-[ferredoxin] + 2 H(+). The catalysed reaction is dimethylallyl diphosphate + 2 oxidized [2Fe-2S]-[ferredoxin] + H2O = (2E)-4-hydroxy-3-methylbut-2-enyl diphosphate + 2 reduced [2Fe-2S]-[ferredoxin] + 2 H(+). Its pathway is isoprenoid biosynthesis; dimethylallyl diphosphate biosynthesis; dimethylallyl diphosphate from (2E)-4-hydroxy-3-methylbutenyl diphosphate: step 1/1. The protein operates within isoprenoid biosynthesis; isopentenyl diphosphate biosynthesis via DXP pathway; isopentenyl diphosphate from 1-deoxy-D-xylulose 5-phosphate: step 6/6. Catalyzes the conversion of 1-hydroxy-2-methyl-2-(E)-butenyl 4-diphosphate (HMBPP) into a mixture of isopentenyl diphosphate (IPP) and dimethylallyl diphosphate (DMAPP). Acts in the terminal step of the DOXP/MEP pathway for isoprenoid precursor biosynthesis. In Bradyrhizobium diazoefficiens (strain JCM 10833 / BCRC 13528 / IAM 13628 / NBRC 14792 / USDA 110), this protein is 4-hydroxy-3-methylbut-2-enyl diphosphate reductase 1.